Consider the following 683-residue polypeptide: DNA ligase (683 aa).

NAD(+)-binding positions include 35–39 (DTEYD), 84–85 (SL), and E116. K118 serves as the catalytic N6-AMP-lysine intermediate. The NAD(+) site is built by R139, E176, K293, and K317. Positions 419, 422, 437, and 443 each coordinate Zn(2+). Positions 602–683 (AGPQLLAGKT…LMKLLAKGVE (82 aa)) constitute a BRCT domain.

The protein belongs to the NAD-dependent DNA ligase family. LigA subfamily. It depends on Mg(2+) as a cofactor. Requires Mn(2+) as cofactor.

The catalysed reaction is NAD(+) + (deoxyribonucleotide)n-3'-hydroxyl + 5'-phospho-(deoxyribonucleotide)m = (deoxyribonucleotide)n+m + AMP + beta-nicotinamide D-nucleotide.. In terms of biological role, DNA ligase that catalyzes the formation of phosphodiester linkages between 5'-phosphoryl and 3'-hydroxyl groups in double-stranded DNA using NAD as a coenzyme and as the energy source for the reaction. It is essential for DNA replication and repair of damaged DNA. The sequence is that of DNA ligase from Dechloromonas aromatica (strain RCB).